The primary structure comprises 147 residues: UPF0735 ACT domain-containing protein YszB (147 aa).

Residues 70-145 (TLFFHLEDRS…FVEKVEILGS (76 aa)) form the ACT domain.

The protein belongs to the UPF0735 family.

This Bacillus subtilis (strain 168) protein is UPF0735 ACT domain-containing protein YszB (yszB).